The sequence spans 386 residues: Endonuclease III homolog 2, chloroplastic (386 aa).

The N-terminal 50 residues, Met-1–Glu-50, are a transit peptide targeting the chloroplast. The disordered stretch occupies residues Arg-44–Lys-66. The HhH domain occupies Tyr-252 to Leu-278. The Nucleophile; for N-glycosylase activity role is filled by Lys-272. Positions 347, 354, 357, and 363 each coordinate [4Fe-4S] cluster.

The protein belongs to the Nth/MutY family. The cofactor is [4Fe-4S] cluster.

It is found in the plastid. It localises to the chloroplast stroma. The protein resides in the chloroplast nucleoid. The catalysed reaction is 2'-deoxyribonucleotide-(2'-deoxyribose 5'-phosphate)-2'-deoxyribonucleotide-DNA = a 3'-end 2'-deoxyribonucleotide-(2,3-dehydro-2,3-deoxyribose 5'-phosphate)-DNA + a 5'-end 5'-phospho-2'-deoxyribonucleoside-DNA + H(+). Functionally, bifunctional DNA N-glycosylase with associated apurinic/apyrimidinic (AP) lyase function that catalyzes the first step in base excision repair (BER), the primary repair pathway for the repair of oxidative DNA damage. The DNA N-glycosylase activity releases the damaged DNA base from DNA by cleaving the N-glycosidic bond, leaving an AP site. The AP lyase activity cleaves the phosphodiester bond 3' to the AP site by a beta-elimination. Primarily recognizes and repairs oxidative base damage of pyrimidines. This chain is Endonuclease III homolog 2, chloroplastic (NTH2), found in Arabidopsis thaliana (Mouse-ear cress).